Consider the following 1154-residue polypeptide: Paired amphipathic helix protein pst3 (1154 aa).

Disordered regions lie at residues 1–71 (MDVM…RSVT) and 91–110 (SGKDGSISSQNAEGLSSSSN). A compositionally biased stretch (basic and acidic residues) spans 9–27 (DSERDNPGDKVETQSDKNH). Polar residues-rich tracts occupy residues 32–45 (SPSQSQSPVNTSLH) and 100–110 (QNAEGLSSSSN). A PAH 1 domain is found at 111-181 (RPLDVNDALS…EGFNTFLPSG (71 aa)). Disordered stretches follow at residues 199 to 249 (GTPM…STEN) and 321 to 376 (DNVD…KTSR). The segment covering 228-241 (STSPTDSQPQPSAP) has biased composition (low complexity). Residues 252-322 (PRVDFNYAIA…EEFKLFLPDN (71 aa)) enclose the PAH 2 domain. Polar residues-rich tracts occupy residues 323–337 (VDSTEPSTPNVQKSP) and 365–376 (AQISRSISKTSR). A PAH 3 domain is found at 403–472 (SPYAATQEEL…LWFSEFIRWS (70 aa)). Residues 797-824 (NSNNTNVSFQTDETQTEDETMSDIHPDD) form a disordered region.

The protein localises to the nucleus. This Schizosaccharomyces pombe (strain 972 / ATCC 24843) (Fission yeast) protein is Paired amphipathic helix protein pst3 (pst3).